Here is a 178-residue protein sequence, read N- to C-terminus: Fucolectin-1 (178 aa).

The signal sequence occupies residues 1-20 (MKVKTIMLLFQILAISTIKS). The F5/8 type C-like stretch occupies residues 29–178 (QENVAVRGKA…VEVNALLPVN (150 aa)). Ca(2+) contacts are provided by D59, N61, and S70. 3 disulfide bridges follow: C71/C167, C103/C104, and C129/C145. Alpha-L-fucose contacts are provided by H73 and R100. Residues 100 to 102 (RGD) carry the Cell attachment site motif. Position 107 (R107) interacts with alpha-L-fucose. Ca(2+) contacts are provided by C167 and E168.

It belongs to the fucolectin family. As to quaternary structure, homotrimer. In terms of tissue distribution, parenchymal hepatocytes.

The protein localises to the secreted. It is found in the extracellular space. Its function is as follows. Acts as a defensive agent. Recognizes blood group fucosylated oligosaccharides including A, B, H and Lewis B-type antigens. Does not recognize Lewis A antigen and has low affinity for monovalent haptens. This Anguilla japonica (Japanese eel) protein is Fucolectin-1.